Consider the following 450-residue polypeptide: Succinate-semialdehyde dehydrogenase (450 aa).

119 to 120 contributes to the NADP(+) binding site; it reads WN. Residue Arg128 coordinates substrate. NADP(+) contacts are provided by residues 143–146 and 197–198; these read KPAK and GS. Glu219 serves as the catalytic Proton acceptor. An NADP(+)-binding site is contributed by Leu220. Residues Arg247 and Cys253 each coordinate substrate. Catalysis depends on Cys253, which acts as the Nucleophile. Glu350 contributes to the NADP(+) binding site. Ser410 lines the substrate pocket.

The protein belongs to the aldehyde dehydrogenase family. As to quaternary structure, homodimer.

The enzyme catalyses succinate semialdehyde + NAD(+) + H2O = succinate + NADH + 2 H(+). The catalysed reaction is succinate semialdehyde + NADP(+) + H2O = succinate + NADPH + 2 H(+). The protein operates within alkaloid degradation; nicotine degradation. Catalyzes the NAD(P)(+)-dependent oxidation of succinate semialdehyde to succinate, which may enter the citric acid cycle. Is involved in the catabolism of 4-methylaminobutanoate produced from nicotine. Acts preferentially with NADP(+) as cosubstrate but can also use NAD(+). To a lesser extent, is active also towards butyraldehyde (8.5% of the activity observed with succinate semialdehyde) and propionaldehyde (1.6% of the activity observed with succinate semialdehyde) as substrates. This Paenarthrobacter nicotinovorans (Arthrobacter nicotinovorans) protein is Succinate-semialdehyde dehydrogenase (sad).